The following is a 4467-amino-acid chain: Protocadherin-like protein (4467 aa).

Residues 1 to 22 form the signal peptide; sequence MRGINAIVGFLLCFCLLHRINT. 28 consecutive Cadherin domains span residues 23-128, 129-238, 239-350, 351-455, 459-566, 567-664, 665-764, 765-884, 885-994, 1092-1197, 1290-1395, 1396-1499, 1495-1597, 1601-1701, 1793-1891, 1892-1992, 1993-2100, 2101-2202, 2203-2312, 2313-2423, 2425-2529, 2530-2639, 2640-2746, 2747-2849, 2850-2954, 2955-3062, 3063-3170, and 3173-3288; these read AVQF…SPTF, PQHL…SPVF, EKKS…VPVF, QEES…TPVF, NPQQ…NPDF, SKVV…PPTF, KNAP…PPTF, SRSS…SPEF, SQTS…PPLF, EAQP…QPRF, SRTV…SPKF, SADS…PPKF, GPPK…EPQF, SNGF…QPVR, TMID…KPQF, SESA…YPKF, EPNL…KPQF, LESD…RPVF, TDCP…FPFF, LTRT…PPAF, PSAV…TPTF, KLEE…PPIF, PKPS…IPKF, DNLI…SPYF, PNPP…APVF, NPRE…PPVF, VPAE…GPWF, and RYYE…EPFD. The Extracellular segment spans residues 23 to 4258; that stretch reads AVQFKQEILE…RPSSRWANPA (4236 aa). The EGF-like 1 domain occupies 3551–3589; the sequence is PDINCTTGTPCLHGGTCHNAVPKGIICECGRDYLGPECQ. 7 disulfide bridges follow: Cys3555-Cys3567, Cys3561-Cys3577, Cys3579-Cys3588, Cys3762-Cys3788, Cys3794-Cys3803, Cys3797-Cys3812, and Cys3814-Cys3823. The region spanning 3590-3788 is the Laminin G-like 1 domain; that stretch reads STTRTFRGNS…LKEVNTELGC (199 aa). The EGF-like 2 domain occupies 3790 to 3824; sequence LNNQCPNCNGRGYCEPFWNYAICVCDLGFGGANCD. In terms of domain architecture, Laminin G-like 2 spans 3842–4096; it reads VKQVKRKRRE…KVIISSSGGS (255 aa). Residues 4089 to 4118 form a disordered region; sequence IISSSGGSVSGGSGGASGGSGGASGSGGSV. Positions 4096-4118 are enriched in gly residues; sequence SVSGGSGGASGGSGGASGSGGSV. The 33-residue stretch at 4206–4238 folds into the EGF-like 3 domain; it reads PCGSNFCRHGGTCVSADPPYCLCPVGWSGPVCE. Disulfide bonds link Cys4207–Cys4218, Cys4212–Cys4226, and Cys4228–Cys4237. A helical membrane pass occupies residues 4259–4279; the sequence is VIACILVILLAILVIIGAVLL. The Cytoplasmic portion of the chain corresponds to 4280 to 4467; the sequence is KRRPQPAVVA…NLNRIFNEDE (188 aa). A disordered region spans residues 4424 to 4445; the sequence is DVDDLSELGDSDEEPDEEEEQE.

In terms of tissue distribution, component of the acid-insoluble organic matrix of the aragonitic skeleton (at protein level).

It localises to the membrane. The sequence is that of Protocadherin-like protein from Acropora millepora (Staghorn coral).